Reading from the N-terminus, the 615-residue chain is TORTIFOLIA1-like protein 3 (615 aa).

HEAT repeat units follow at residues 44–81, 86–123, 125–163, 168–205, and 213–250; these read GNLQ…SLPL, PFLS…RTTK, PFYS…SASD, RLGQ…AGGL, and GGLK…MERN. A disordered region spans residues 288 to 446; the sequence is VPDLSEEVSP…HHVLSENPNS (159 aa). A compositionally biased stretch (polar residues) spans 318 to 347; it reads RVGSTPAKSRTHLVNRSTPPGSSLATTARK. A compositionally biased stretch (basic and acidic residues) spans 391–406; it reads DEQHCDHDENAKETSH. Polar residues predominate over residues 407–426; the sequence is SSHNTVQKLGGVSSSLNGNI. A Phosphoserine modification is found at serine 456.

This Arabidopsis thaliana (Mouse-ear cress) protein is TORTIFOLIA1-like protein 3.